A 792-amino-acid chain; its full sequence is Phenylalanine--tRNA ligase beta subunit (792 aa).

The region spanning 40-156 (FPRTENLIVG…AKLNDIDPLK (117 aa)) is the tRNA-binding domain. One can recognise a B5 domain in the interval 404–472 (LKDNLIDFDS…KKINVNNLEL (69 aa)). Mg(2+)-binding residues include Asp450, Asp456, Glu459, and Glu460.

This sequence belongs to the phenylalanyl-tRNA synthetase beta subunit family. Type 1 subfamily. In terms of assembly, tetramer of two alpha and two beta subunits. Mg(2+) serves as cofactor.

The protein resides in the cytoplasm. The catalysed reaction is tRNA(Phe) + L-phenylalanine + ATP = L-phenylalanyl-tRNA(Phe) + AMP + diphosphate + H(+). The polypeptide is Phenylalanine--tRNA ligase beta subunit (Malacoplasma penetrans (strain HF-2) (Mycoplasma penetrans)).